The sequence spans 151 residues: Acidic phospholipase A2 5 (151 aa).

Residues 1–27 form the signal peptide; the sequence is MYPAHLLVLLAVCVSLLGAASIPARPL. 7 disulfides stabilise this stretch: Cys-38/Cys-104, Cys-54/Cys-151, Cys-56/Cys-72, Cys-71/Cys-132, Cys-78/Cys-125, Cys-88/Cys-118, and Cys-111/Cys-123. The Ca(2+) site is built by Tyr-55, Gly-57, and Gly-59. His-75 is an active-site residue. Position 76 (Asp-76) interacts with Ca(2+). Residue Asp-126 is part of the active site.

This sequence belongs to the phospholipase A2 family. Group I subfamily. D49 sub-subfamily. It depends on Ca(2+) as a cofactor. As to expression, expressed by the venom gland.

Its subcellular location is the secreted. It catalyses the reaction a 1,2-diacyl-sn-glycero-3-phosphocholine + H2O = a 1-acyl-sn-glycero-3-phosphocholine + a fatty acid + H(+). PLA2 catalyzes the calcium-dependent hydrolysis of the 2-acyl groups in 3-sn-phosphoglycerides. The protein is Acidic phospholipase A2 5 of Tropidechis carinatus (Australian rough-scaled snake).